We begin with the raw amino-acid sequence, 106 residues long: Iron-sulfur cluster assembly protein CyaY (106 aa).

It belongs to the frataxin family.

Functionally, involved in iron-sulfur (Fe-S) cluster assembly. May act as a regulator of Fe-S biogenesis. The chain is Iron-sulfur cluster assembly protein CyaY from Escherichia coli O6:H1 (strain CFT073 / ATCC 700928 / UPEC).